The sequence spans 315 residues: Putative steroid dehydrogenase 2 (315 aa).

Residue 47-76 participates in NADP(+) binding; sequence ASWAVVTGATDGIGKSYSFELARRGFNVYI. Tyr-202 is an active-site residue.

This sequence belongs to the short-chain dehydrogenases/reductases (SDR) family. 17-beta-HSD 3 subfamily.

The polypeptide is Putative steroid dehydrogenase 2 (stdh-2) (Caenorhabditis elegans).